The chain runs to 204 residues: Protein PAXX (204 aa).

The region spanning 37 to 79 (FNLYVTDAAELWSTCFTPDSLAALKARFGLSAAEDITPRFRAA) is the PISA domain. Serine 134 bears the Phosphoserine mark. Positions 143-204 (EETAVSPRKS…PAGGVDFDET (62 aa)) are disordered. At threonine 145 the chain carries Phosphothreonine. Phosphoserine occurs at positions 148 and 152. The interval 171–204 (GPGPGVRRRCPGESLINPGFKSKKPAGGVDFDET) is mediates interaction with XRCC5/Ku80 and XRCC6/Ku70 and association with the non-homologous end joining core complex. Residues 190 to 204 (FKSKKPAGGVDFDET) carry the XLM motif.

The protein belongs to the XRCC4-XLF family. PAXX subfamily. In terms of assembly, homodimer. Interacts with the DNA-bound XRCC5/Ku80 and XRCC6/Ku70 heterodimer (Ku complex); the interaction is direct. Associated component of the non-homologous end joining (NHEJ) complex, composed of the core proteins PRKDC, LIG4, XRCC4, XRCC6/Ku70, XRCC5/Ku86 and NHEJ1/XLF. Interacts with POLL (DNA polymerase lambda); promoting POLL recruitment to double-strand breaks (DSBs) and stimulation of the end-filling activity of POLL. Phosphorylation may inhibit interaction with the DNA-bound XRCC5/Ku80 and XRCC6/Ku70 heterodimer (Ku complex).

Its subcellular location is the nucleus. It localises to the chromosome. It is found in the cytoplasm. Functionally, non-essential DNA repair protein involved in DNA non-homologous end joining (NHEJ); participates in double-strand break (DSB) repair and V(D)J recombination. May act as a scaffold required for accumulation of the Ku heterodimer, composed of XRCC5/Ku80 and XRCC6/Ku70, at double-strand break sites and promote the assembly and/or stability of the NHEJ machinery. Involved in NHEJ by promoting the ligation of blunt-ended DNA ends. Together with NHEJ1/XLF, collaborates with DNA polymerase lambda (POLL) to promote joining of non-cohesive DNA ends. Constitutes a non-essential component of classical NHEJ: has a complementary but distinct function with NHEJ1/XLF in DNA repair. Able to restrict infection by herpesvirus 1 (HSV-1) via an unknown mechanism. This Homo sapiens (Human) protein is Protein PAXX.